Here is a 156-residue protein sequence, read N- to C-terminus: ATP synthase subunit b (156 aa).

The helical transmembrane segment at 1–21 (MSINATLLIQIIAFVLLIWFV) threads the bilayer.

The protein belongs to the ATPase B chain family. F-type ATPases have 2 components, F(1) - the catalytic core - and F(0) - the membrane proton channel. F(1) has five subunits: alpha(3), beta(3), gamma(1), delta(1), epsilon(1). F(0) has three main subunits: a(1), b(2) and c(10-14). The alpha and beta chains form an alternating ring which encloses part of the gamma chain. F(1) is attached to F(0) by a central stalk formed by the gamma and epsilon chains, while a peripheral stalk is formed by the delta and b chains.

It is found in the cell inner membrane. In terms of biological role, f(1)F(0) ATP synthase produces ATP from ADP in the presence of a proton or sodium gradient. F-type ATPases consist of two structural domains, F(1) containing the extramembraneous catalytic core and F(0) containing the membrane proton channel, linked together by a central stalk and a peripheral stalk. During catalysis, ATP synthesis in the catalytic domain of F(1) is coupled via a rotary mechanism of the central stalk subunits to proton translocation. Its function is as follows. Component of the F(0) channel, it forms part of the peripheral stalk, linking F(1) to F(0). The protein is ATP synthase subunit b of Hydrogenovibrio crunogenus (strain DSM 25203 / XCL-2) (Thiomicrospira crunogena).